Reading from the N-terminus, the 702-residue chain is Polyribonucleotide nucleotidyltransferase 2 (702 aa).

Residues Asp-483 and Asp-489 each contribute to the Mg(2+) site. One can recognise a KH domain in the interval 550–609 (PQVTKLKVHPDKVREVIGAGGKVINKIIDETGVKINIENDGTIYIAAPDQESARVALEMI). Residues 619–687 (GEVYTGKVIK…PQGKIGLSRK (69 aa)) enclose the S1 motif domain.

This sequence belongs to the polyribonucleotide nucleotidyltransferase family. Mg(2+) serves as cofactor.

It localises to the cytoplasm. It carries out the reaction RNA(n+1) + phosphate = RNA(n) + a ribonucleoside 5'-diphosphate. Its function is as follows. Involved in mRNA degradation. Catalyzes the phosphorolysis of single-stranded polyribonucleotides processively in the 3'- to 5'-direction. This Alkaliphilus metalliredigens (strain QYMF) protein is Polyribonucleotide nucleotidyltransferase 2.